Here is a 150-residue protein sequence, read N- to C-terminus: Large ribosomal subunit protein eL19 (150 aa).

The interval 56 to 89 (KGQSRARARAFQEARKKGRHRGPGSKKGKKTARM) is disordered. Residues 71-89 (KKGRHRGPGSKKGKKTARM) are compositionally biased toward basic residues.

Belongs to the eukaryotic ribosomal protein eL19 family. As to quaternary structure, part of the 50S ribosomal subunit.

Its function is as follows. Binds to the 23S rRNA. The sequence is that of Large ribosomal subunit protein eL19 from Thermococcus kodakarensis (strain ATCC BAA-918 / JCM 12380 / KOD1) (Pyrococcus kodakaraensis (strain KOD1)).